The sequence spans 39 residues: Photosystem II reaction center protein J (39 aa).

The chain crosses the membrane as a helical span at residues 9–29 (LWLVATVGGIAAITVLGIFIY).

It belongs to the PsbJ family. As to quaternary structure, PSII is composed of 1 copy each of membrane proteins PsbA, PsbB, PsbC, PsbD, PsbE, PsbF, PsbH, PsbI, PsbJ, PsbK, PsbL, PsbM, PsbT, PsbX, PsbY, PsbZ, Psb30/Ycf12, at least 3 peripheral proteins of the oxygen-evolving complex and a large number of cofactors. It forms dimeric complexes.

It is found in the plastid. Its subcellular location is the chloroplast thylakoid membrane. One of the components of the core complex of photosystem II (PSII). PSII is a light-driven water:plastoquinone oxidoreductase that uses light energy to abstract electrons from H(2)O, generating O(2) and a proton gradient subsequently used for ATP formation. It consists of a core antenna complex that captures photons, and an electron transfer chain that converts photonic excitation into a charge separation. The chain is Photosystem II reaction center protein J from Pyropia yezoensis (Susabi-nori).